The sequence spans 366 residues: Anhydro-N-acetylmuramic acid kinase (366 aa).

10–17 (GTSMDGID) contacts ATP.

This sequence belongs to the anhydro-N-acetylmuramic acid kinase family.

It carries out the reaction 1,6-anhydro-N-acetyl-beta-muramate + ATP + H2O = N-acetyl-D-muramate 6-phosphate + ADP + H(+). It participates in amino-sugar metabolism; 1,6-anhydro-N-acetylmuramate degradation. It functions in the pathway cell wall biogenesis; peptidoglycan recycling. In terms of biological role, catalyzes the specific phosphorylation of 1,6-anhydro-N-acetylmuramic acid (anhMurNAc) with the simultaneous cleavage of the 1,6-anhydro ring, generating MurNAc-6-P. Is required for the utilization of anhMurNAc either imported from the medium or derived from its own cell wall murein, and thus plays a role in cell wall recycling. This chain is Anhydro-N-acetylmuramic acid kinase, found in Legionella pneumophila subsp. pneumophila (strain Philadelphia 1 / ATCC 33152 / DSM 7513).